The chain runs to 849 residues: Neprilysin-1 (849 aa).

The Cytoplasmic segment spans residues 1 to 113 (MSQQHEATAA…LKESQQRRRL (113 aa)). Residues 41-61 (QQQVQHQAPHQMQQQQQQQQQ) show a composition bias toward low complexity. The interval 41 to 63 (QQQVQHQAPHQMQQQQQQQQQNK) is disordered. A helical; Signal-anchor for type II membrane protein transmembrane segment spans residues 114–134 (LVLAIAFTVLGAAIGALAIYF). At 135-849 (ASVHQRCHLY…MNPAEKCSVW (715 aa)) the chain is on the extracellular side. The span at 146-155 (LEPDNDDRPN) shows a compositional bias: basic and acidic residues. The disordered stretch occupies residues 146–167 (LEPDNDDRPNGRWNQDSGSAHE). The Peptidase M13 domain maps to 172-849 (ICMTQECVRT…MNPAEKCSVW (678 aa)). Intrachain disulfides connect C173–C178, C196–C834, C204–C794, C260–C512, and C721–C846. Residues N309, N326, N393, N589, and N599 are each glycosylated (N-linked (GlcNAc...) asparagine). Zn(2+) is bound at residue H684. E685 is a catalytic residue. Zn(2+) is bound at residue H688. Residue N709 is glycosylated (N-linked (GlcNAc...) asparagine). E746 is a binding site for Zn(2+). D750 functions as the Proton donor in the catalytic mechanism. N-linked (GlcNAc...) asparagine glycosylation occurs at N778.

It belongs to the peptidase M13 family. Zn(2+) serves as cofactor. In terms of tissue distribution, expressed in the testicular tube, near and in the seminal vesicles. In adults and third-instar larvae, expressed in the midgut and in the mushroom bodies of the brain and neurons in the pars intercerebralis. Also expressed in neurons of the ventral ganglion and imaginal disks (wing and leg) of third-instar larvae. In stage 17 embryos, expressed in the peripheral nervous system, pharynx and midgut.

The protein localises to the cell membrane. It carries out the reaction Preferential cleavage of polypeptides between hydrophobic residues, particularly with Phe or Tyr at P1'.. Metalloendoprotease which functions in fertility and memory formation. Required in the dorsal paired medial neurons and alpha/beta mushroom body neurons for the proper formation of long-term and middle-term memories. Required in males to maximise egg-laying in female mates and is also required in females for their fertility. The polypeptide is Neprilysin-1 (Drosophila melanogaster (Fruit fly)).